The sequence spans 179 residues: Peptide deformylase (179 aa).

2 residues coordinate Fe cation: Cys102 and His144. Glu145 is a catalytic residue. His148 contributes to the Fe cation binding site.

This sequence belongs to the polypeptide deformylase family. It depends on Fe(2+) as a cofactor.

The enzyme catalyses N-terminal N-formyl-L-methionyl-[peptide] + H2O = N-terminal L-methionyl-[peptide] + formate. Removes the formyl group from the N-terminal Met of newly synthesized proteins. Requires at least a dipeptide for an efficient rate of reaction. N-terminal L-methionine is a prerequisite for activity but the enzyme has broad specificity at other positions. This Wolbachia sp. subsp. Brugia malayi (strain TRS) protein is Peptide deformylase.